The following is a 181-amino-acid chain: Oligoribonuclease (181 aa).

In terms of domain architecture, Exonuclease spans 8–171 (LIWIDLEMTG…DDIRESVAEL (164 aa)). Tyr129 is an active-site residue.

The protein belongs to the oligoribonuclease family.

The protein localises to the cytoplasm. 3'-to-5' exoribonuclease specific for small oligoribonucleotides. This is Oligoribonuclease from Sodalis glossinidius (strain morsitans).